We begin with the raw amino-acid sequence, 208 residues long: Putative dioxygenase RT0384 (208 aa).

It belongs to the intradiol ring-cleavage dioxygenase family.

The protein is Putative dioxygenase RT0384 of Rickettsia typhi (strain ATCC VR-144 / Wilmington).